A 108-amino-acid chain; its full sequence is Colipase B (108 aa).

The signal sequence occupies residues 1 to 13; it reads LALLLVALAVAYA. Positions 14–18 are cleaved as a propeptide — enterostatin, activation peptide; the sequence is VPDPR. 5 disulfide bridges follow: C30-C41, C36-C52, C40-C74, C62-C82, and C76-C100. W65 contacts taurodeoxycholate.

Belongs to the colipase family. Forms a 1:1 stoichiometric complex with pancreatic lipase. In terms of tissue distribution, expressed by the pancreas.

The protein localises to the secreted. In terms of biological role, colipase is a cofactor of pancreatic lipase. It allows the lipase to anchor itself to the lipid-water interface. Without colipase the enzyme is washed off by bile salts, which have an inhibitory effect on the lipase. Enterostatin has a biological activity as a satiety signal. The chain is Colipase B (CLPS2) from Equus caballus (Horse).